The chain runs to 75 residues: Putative antitoxin VapB12 (75 aa).

Functionally, putative antitoxin component of a possible type II toxin-antitoxin (TA) system. The cognate toxin is VapC12. The sequence is that of Putative antitoxin VapB12 (vapB12) from Mycobacterium tuberculosis (strain CDC 1551 / Oshkosh).